The chain runs to 7639 residues: Nonribosomal peptide synthetase 4 (7639 aa).

The adenylation 1 stretch occupies residues 244-636 (WQGAMRPDAE…AGRKDAQIKF (393 aa)). Positions 776-852 (TFSNGTESQL…ALARHVKEIE (77 aa)) constitute a Carrier 1 domain. Residue Ser813 is modified to O-(pantetheine 4'-phosphoryl)serine. The interval 865-1295 (FELSPIQRLY…EQNLSLLVES (431 aa)) is epimerization 1. The interval 1337–1767 (VEDIYPCSPM…HLGPRHHQQI (431 aa)) is condensation 1. The segment at 1786–2181 (FEEQAILRPE…FGRKDTQVKL (396 aa)) is adenylation 2. One can recognise a Carrier 2 domain in the interval 2313–2389 (APASDMEKQL…DMAQSALPLS (77 aa)). Ser2350 carries the post-translational modification O-(pantetheine 4'-phosphoryl)serine. A condensation 2 region spans residues 2426-2852 (VEDIYPCTPL…LISTRDYQSL (427 aa)). The interval 2878 to 3269 (QPLDKLAVCA…QGRKDNQVKI (392 aa)) is adenylation 3. The Carrier 3 domain occupies 3403-3479 (REATETETKL…KLASFVQAVE (77 aa)). Residue Ser3440 is modified to O-(pantetheine 4'-phosphoryl)serine. The interval 3491–3928 (AFPLSPIQKL…RMTQAKAEPQ (438 aa)) is epimerization 2. Residues 3961 to 4389 (EAVYPCSPVQ…VSDDCAQQLT (429 aa)) are condensation 3. The segment at 4407-4810 (FERNVQSLPH…VSRKDTQIKL (404 aa)) is adenylation 4. A Carrier 4 domain is found at 4944–5020 (APTTMMQRKL…EMATCCGHSE (77 aa)). Residue Ser4981 is modified to O-(pantetheine 4'-phosphoryl)serine. A condensation 4 region spans residues 5058-5478 (QDLYPCSSLQ…QFCSEEDLQM (421 aa)). The segment at 5498–5900 (FWQSVATYHD…IGRKDNQVKL (403 aa)) is adenylation 5. In terms of domain architecture, Carrier 5 spans 6039–6115 (TDTTFVGQLL…DLVTLIEKEG (77 aa)). At Ser6076 the chain carries O-(pantetheine 4'-phosphoryl)serine. Residues 6133 to 6567 (FALSPIQQLF…EVLGNMAMEL (435 aa)) are epimerization 3. Positions 6607 to 7032 (VEDMYPCSPM…EALSHLRVSQ (426 aa)) are condensation 5. In terms of domain architecture, Carrier 6 spans 7088–7164 (RDKDQVYNKL…TLLNCLRDKS (77 aa)). At Ser7125 the chain carries O-(pantetheine 4'-phosphoryl)serine. Residues 7254–7603 (LDGEGPLDVA…SNTEVCFLYR (350 aa)) are condensation 6.

This sequence belongs to the NRP synthetase family.

It carries out the reaction D-allo-threonine + D-leucine + D-alanine + L-proline + 2 L-leucine + A = fusahexin + AH2 + 6 H2O. It participates in secondary metabolite biosynthesis. Functionally, nonribosomal peptide synthetase; part of the gene cluster that mediates the biosynthesis of the fusahexin, a cyclic hydrophobic hexapeptide with the amino acid sequence cyclo-(D-Ala-L-Leu-D-allo-Thr-L-Pro-D-Leu-L-Leu) that plays an important role in cell surface hydrophobicity. Fusahexin might also play a role in virulence, sensitivity to osmotic stress and oxidative stress. NRPS4 is the only enzyme within the cluster and its 5 catalytic modules are sufficient to produce fusahexin. The modules 1 to 4 incorporate respectively D-alanine, L-leucine, D-allo-threonine, and L-proline, which is supported by the presence of epimerase domains in modules 1 and 3, which incorporate D-amino acids. The terminal module is responsible for incorporation of the two adjacent leucine units, where the epimerase domain is only used to convert the first unit to D-leucine. The terminal condensation domain (Ct) is involved in cyclization with D-alanine and thereby releasing of fusahexin. This chain is Nonribosomal peptide synthetase 4, found in Gibberella zeae (strain ATCC MYA-4620 / CBS 123657 / FGSC 9075 / NRRL 31084 / PH-1) (Wheat head blight fungus).